The chain runs to 364 residues: ATP synthase gamma chain, chloroplastic (364 aa).

The N-terminal 41 residues, 1-41 (MACSLSFSSSVSTFHLPTTTQSTQAPPNNATTLPTTNPIQC), are a transit peptide targeting the chloroplast. Residues 17–36 (PTTTQSTQAPPNNATTLPTT) are disordered. Low complexity predominate over residues 25–36 (APPNNATTLPTT). Cysteine 130 is an active-site residue. Cysteine 240 and cysteine 246 are disulfide-bonded.

It belongs to the ATPase gamma chain family. In terms of assembly, F-type ATPases have 2 components, CF(1) - the catalytic core - and CF(0) - the membrane proton channel. CF(1) has five subunits: alpha(3), beta(3), gamma(1), delta(1), epsilon(1). CF(0) has four main subunits: a, b, b' and c. Disulfide bond; Cys-240 and Cys-246 are known to form a disulfide bridge in the dark which gives rise to an inactive enzyme. Activation can be brought about by a ferredoxin-dependent reduction of the disulfide bond in the light.

Its subcellular location is the plastid. The protein resides in the chloroplast thylakoid membrane. Its function is as follows. Produces ATP from ADP in the presence of a proton gradient across the membrane. The gamma chain is believed to be important in regulating ATPase activity and the flow of protons through the CF(0) complex. The sequence is that of ATP synthase gamma chain, chloroplastic (ATPC) from Spinacia oleracea (Spinach).